The sequence spans 473 residues: Photosystem II CP43 reaction center protein (473 aa).

A propeptide spanning residues Met1 to Glu14 is cleaved from the precursor. Thr15 bears the N-acetylthreonine mark. Thr15 is subject to Phosphothreonine. The next 5 helical transmembrane spans lie at Leu69 to Ala93, Leu134 to Asn155, Lys178 to Thr200, Lys255 to Ser275, and Trp291 to Ala312. Glu367 contacts [CaMn4O5] cluster. Residues Arg447–Pro471 traverse the membrane as a helical segment.

Belongs to the PsbB/PsbC family. PsbC subfamily. PSII is composed of 1 copy each of membrane proteins PsbA, PsbB, PsbC, PsbD, PsbE, PsbF, PsbH, PsbI, PsbJ, PsbK, PsbL, PsbM, PsbT, PsbX, PsbY, PsbZ, Psb30/Ycf12, at least 3 peripheral proteins of the oxygen-evolving complex and a large number of cofactors. It forms dimeric complexes. Binds multiple chlorophylls and provides some of the ligands for the Ca-4Mn-5O cluster of the oxygen-evolving complex. It may also provide a ligand for a Cl- that is required for oxygen evolution. PSII binds additional chlorophylls, carotenoids and specific lipids. is required as a cofactor.

It is found in the plastid. The protein localises to the chloroplast thylakoid membrane. Functionally, one of the components of the core complex of photosystem II (PSII). It binds chlorophyll and helps catalyze the primary light-induced photochemical processes of PSII. PSII is a light-driven water:plastoquinone oxidoreductase, using light energy to abstract electrons from H(2)O, generating O(2) and a proton gradient subsequently used for ATP formation. The protein is Photosystem II CP43 reaction center protein of Arabis hirsuta (Hairy rock-cress).